Consider the following 436-residue polypeptide: Putative ankyrin repeat protein FPV245 (436 aa).

ANK repeat units follow at residues 1–30, 34–63, 67–96, 98–119, 123–152, 156–185, 189–218, 222–252, 253–283, and 287–317; these read MSVD…CINI, ETTT…QVNH, KIPN…DTSI, PVPC…KVNT, KSKT…DVNI, NGCY…YANV, YGNS…NISN, NGVT…DTDV, DGYT…DISI, and NGRN…LINE.

This Vertebrata (FPV) protein is Putative ankyrin repeat protein FPV245.